Consider the following 459-residue polypeptide: Cysteine--tRNA ligase (459 aa).

Zn(2+) is bound at residue Cys28. The 'HIGH' region motif lies at 30-40 (VTVYDLCHFGH). Zn(2+)-binding residues include Cys209, His234, and Glu238. The 'KMSKS' region signature appears at 266–270 (KMSKS). Lys269 serves as a coordination point for ATP.

The protein belongs to the class-I aminoacyl-tRNA synthetase family. In terms of assembly, monomer. Zn(2+) is required as a cofactor.

It is found in the cytoplasm. It catalyses the reaction tRNA(Cys) + L-cysteine + ATP = L-cysteinyl-tRNA(Cys) + AMP + diphosphate. The polypeptide is Cysteine--tRNA ligase (Actinobacillus pleuropneumoniae serotype 3 (strain JL03)).